We begin with the raw amino-acid sequence, 705 residues long: DNA ligase (705 aa).

Residues 43-47 (DAEYD), 92-93 (SL), and aspartate 123 each bind NAD(+). Lysine 125 serves as the catalytic N6-AMP-lysine intermediate. Residues arginine 146, glutamate 184, lysine 304, and lysine 328 each contribute to the NAD(+) site. The Zn(2+) site is built by cysteine 422, cysteine 425, cysteine 440, and cysteine 445. Residues 607–696 (TPVTPLAGKK…EEISGQAADD (90 aa)) enclose the BRCT domain. The tract at residues 684–705 (SESEEISGQAADDYENSLLRVQ) is disordered.

It belongs to the NAD-dependent DNA ligase family. LigA subfamily. Mg(2+) serves as cofactor. Requires Mn(2+) as cofactor.

The catalysed reaction is NAD(+) + (deoxyribonucleotide)n-3'-hydroxyl + 5'-phospho-(deoxyribonucleotide)m = (deoxyribonucleotide)n+m + AMP + beta-nicotinamide D-nucleotide.. Its function is as follows. DNA ligase that catalyzes the formation of phosphodiester linkages between 5'-phosphoryl and 3'-hydroxyl groups in double-stranded DNA using NAD as a coenzyme and as the energy source for the reaction. It is essential for DNA replication and repair of damaged DNA. The polypeptide is DNA ligase (Oleidesulfovibrio alaskensis (strain ATCC BAA-1058 / DSM 17464 / G20) (Desulfovibrio alaskensis)).